The primary structure comprises 505 residues: Methylmalonyl-CoA carboxyltransferase 5S subunit (505 aa).

In terms of domain architecture, Pyruvate carboxyltransferase spans Val14–His276. Substrate is bound by residues Arg22 to Gln26, Ala59, and Lys184. Residue Asp23 participates in Co(2+) binding. Co(2+)-binding residues include Lys184, His215, and His217. N6-carboxylysine; partial is present on Lys184.

As to quaternary structure, homodimer. Transcarboxylase is composed of three subunits: 1.3S, 5S, and 12S. The core of the enzyme is composed of six 12S subunits. On each side of the core there are three pairs of 5S subunits. Each 5S dimer is attached to the core by two 1.3S subunits. Thus the total number of chains is 30 (6 + 12 + 12). It depends on Co(2+) as a cofactor. Post-translationally, lys-184 is carboxylated in the free enzyme and helps to coordinate the cobalt ion. Lys-184 is partially carboxylated in the complex with pyruvate, but is not carboxylated in the oxaloacetate-bound form.

The enzyme catalyses (S)-methylmalonyl-CoA + pyruvate = propanoyl-CoA + oxaloacetate. Its function is as follows. The 5S subunit specifically catalyzes the transfer of the carboxyl group from biotin of the 1.3S subunit to pyruvate to form oxaloacetate and 1.3S biotin. The polypeptide is Methylmalonyl-CoA carboxyltransferase 5S subunit (Propionibacterium freudenreichii subsp. shermanii).